The chain runs to 290 residues: MFTLPPVLNSSYVGIHGNSTFINFEFSFYTLPMLFLLVPILYIPITIIIILRILVKLYYAFRDRNNNVYLLSAISISQCMCLLFFLADFLYLRLPTSGLLTSWCASIEPNRFITILTIFTYHINYSTMIFPFLVSIMRLILIISPKNHKKFNGQLLRFSIPFICVYPIIFTFFMFPAIGYCSYAAYPFPFGAIIFRIERTFFGLVNNFSLLFNTLFWMTCCIITNFILLLLLIKSRCLLNAQTRSMHSYKVEVSLSLTTFSMIFSYLSNAMIVFLLLELHIVGHYASPIW.

7 consecutive transmembrane segments (helical) span residues 31–51, 70–90, 112–134, 158–178, 185–205, 213–233, and 262–282; these read LPMLFLLVPILYIPITIIIIL, LLSAISISQCMCLLFFLADFL, FITILTIFTYHINYSTMIFPFLV, FSIPFICVYPIIFTFFMFPAI, AYPFPFGAIIFRIERTFFGLV, NTLFWMTCCIITNFILLLLLI, and MIFSYLSNAMIVFLLLELHIV.

This sequence belongs to the nematode receptor-like protein sru family.

Its subcellular location is the membrane. This Caenorhabditis elegans protein is Serpentine receptor class U-26 (sru-26).